A 364-amino-acid polypeptide reads, in one-letter code: Spermidine/putrescine import ATP-binding protein PotA (364 aa).

Residues I6 to I236 enclose the ABC transporter domain. G38 to T45 contributes to the ATP binding site.

It belongs to the ABC transporter superfamily. Spermidine/putrescine importer (TC 3.A.1.11.1) family. As to quaternary structure, the complex is composed of two ATP-binding proteins (PotA), two transmembrane proteins (PotB and PotC) and a solute-binding protein (PotD).

The protein resides in the cell inner membrane. It carries out the reaction ATP + H2O + polyamine-[polyamine-binding protein]Side 1 = ADP + phosphate + polyamineSide 2 + [polyamine-binding protein]Side 1.. Part of the ABC transporter complex PotABCD involved in spermidine/putrescine import. Responsible for energy coupling to the transport system. This chain is Spermidine/putrescine import ATP-binding protein PotA, found in Legionella pneumophila subsp. pneumophila (strain Philadelphia 1 / ATCC 33152 / DSM 7513).